A 68-amino-acid chain; its full sequence is Large ribosomal subunit protein bL35 (68 aa).

The protein belongs to the bacterial ribosomal protein bL35 family.

The sequence is that of Large ribosomal subunit protein bL35 from Rickettsia bellii (strain RML369-C).